The following is a 91-amino-acid chain: Probable insulin-like peptide gamma-type 1 (91 aa).

Residues 1 to 26 (MSSYRQTLFILIILIVIILFVNEGQG) form the signal peptide. 3 cysteine pairs are disulfide-bonded: cysteine 37/cysteine 66, cysteine 49/cysteine 79, and cysteine 65/cysteine 70.

Belongs to the insulin family.

The protein localises to the secreted. The protein is Probable insulin-like peptide gamma-type 1 (ins-11) of Caenorhabditis elegans.